The primary structure comprises 201 residues: Probable DNA replication complex GINS protein PSF1 (201 aa).

Belongs to the GINS1/PSF1 family. As to quaternary structure, component of the GINS complex which is a heterotetramer of gins1, gins2, gins3 and gins4.

The protein resides in the nucleus. Its function is as follows. The GINS complex plays an essential role in the initiation of DNA replication. The sequence is that of Probable DNA replication complex GINS protein PSF1 from Caenorhabditis briggsae.